The sequence spans 82 residues: Hepcidin (82 aa).

The N-terminal stretch at 1 to 23 (MALSVQIRAACLLLLLLVSLTAG) is a signal peptide. Positions 24-53 (SVLPSQTRQLTDLRTQDTAGATAGLTPVAQ) are excised as a propeptide. Disulfide bonds link C64-C80, C67-C70, C68-C76, and C71-C79.

The protein belongs to the hepcidin family. In terms of assembly, interacts with SLC40A1; this interaction promotes SLC40A1 rapid ubiquitination.

The protein localises to the secreted. In terms of biological role, liver-produced hormone that constitutes the main circulating regulator of iron absorption and distribution across tissues. Acts by promoting endocytosis and degradation of ferroportin/SLC40A1, leading to the retention of iron in iron-exporting cells and decreased flow of iron into plasma. Controls the major flows of iron into plasma: absorption of dietary iron in the intestine, recycling of iron by macrophages, which phagocytose old erythrocytes and other cells, and mobilization of stored iron from hepatocytes. Functionally, has strong antimicrobial activity against E.coli ML35P N.cinerea and weaker against S.epidermidis, S.aureus and group b streptococcus bacteria. Active against the fungus C.albicans. No activity against P.aeruginosa. The protein is Hepcidin (HAMP) of Sus scrofa (Pig).